The primary structure comprises 280 residues: Thioesterase pynI (280 aa).

Residues 136–145 are compositionally biased toward acidic residues; that stretch reads LADDSDDEDN. The tract at residues 136–167 is disordered; the sequence is LADDSDDEDNRSDASDASDDGSTMSDEEEEDD.

Belongs to the AMT4 thioesterase family.

It participates in secondary metabolite biosynthesis. In terms of biological role, thioesterase; part of the gene cluster that mediates the biosynthesis of pyranonigrins, a family of antioxidative compounds. The first step of pyranonigrins biosynthesis is performed by the hybrid PKS-NRPS synthetase that condenses 6 malonyl-CoA units to an acetyl starter unit, to form a 1,3,5-trioxotetradecane-6,8-dienyl-ACP. The enoyl reductase (ER) domain of pynA is likely to be functional during the first two rounds of polyketide chain extension, to generate the saturated C-C bonds of the alkyl side chain. PynA subsequently forms the amide bond between the acyl chain and L-serine. Although pynA has a terminal reductase domain, it appears to require the thioesterase pynI for the release of the straight-chain intermediate from pynA via the formation of a tetramic acid pyranonigrin J. The methyltransferase pynC then coverts pyranonigrin J to pyranonigrin I via N-methylation. The FAD-dependent monooxygenase pynG catalyzes an epoxidation-mediated cyclization to form the dihydro-gamma-pyrone moiety, followed by pynD-catalyzed oxidation of the alcohol to the ketone and enolization to yield the characteristic tetramic acid-fused gamma-pyrone core of pyranonigrin H. Pyranonigrin H is substrate of pynH for dehydration-mediated exo-methylene formation from the serine side chain to produce pyranonigrin E, before the oxidase pynE reduces the exo-methylene of pyranonigrin E into a pendant methyl to form pyranonigrin G. The FAD-linked oxidoreductase pynB performs the reverse reaction and converts pyranonigrin G back to pyranonigrin E. This Aspergillus niger (strain ATCC MYA-4892 / CBS 513.88 / FGSC A1513) protein is Thioesterase pynI.